A 1193-amino-acid polypeptide reads, in one-letter code: Falcilysin (1193 aa).

Zn(2+) is bound at residue histidine 129. The active-site Proton acceptor is glutamate 132. Zn(2+) contacts are provided by histidine 133 and glutamate 243. The disordered stretch occupies residues 376 to 404 (DKTNNHNNNHSNNQSSENNGYSNGSHSSD). Residues 380-394 (NHNNNHSNNQSSENN) are compositionally biased toward low complexity. Residues 395 to 404 (GYSNGSHSSD) show a composition bias toward polar residues. Positions 583–619 (LLEGDENYAQEQENLEKQELKKRIENFNEQEKEQVIK) form a coiled coil.

It belongs to the peptidase M16 family. Monomer. Component of the hemozoin formation complex (HFC) composed of falcipains FP2A and/or FP2B, plasmepsins PMII, PMIII/HAP and PMIV, heme detoxifying protein HDP and falcilysin FLN. The HFC complex is involved in hemoglobin degradation and detoxification of heme in the food vacuole during the asexual blood stage. Requires Zn(2+) as cofactor. Does not require processing for targeting to the food vacuole or maturation.

It is found in the vacuole membrane. The protein resides in the plastid. Its subcellular location is the apicoplast. The protein localises to the vesicle. Functionally, in the food vacuole, acts downstream of proteases plasmepsins PMI and PMII and falcipains during the catabolism of host hemoglobin by cleaving peptide fragments of alpha and beta hemoglobin subunits generated by PMI and PMII and falcipains. In the apicoplast, degrades apicoplast transit peptides after their cleavage. Prefers bulky hydrophobic amino acids in the P1' position at both acidic and neutral pH. At P2', prefers hydrophobic residues at acidic pH; at neutral pH, these same residues are abundant but prefers Arg. At P3', prefers hydrophobic residues, especially Met, at both pH conditions. At P4' and P5', prefers acidic residues at acidic pH, however, at neutral pH, the enzyme is less selective at these positions. The optimal site cleavage at acidic pH is YNEHS-|-FFMEE and, at neutral pH, MKRHS-|-FRMRG. The sequence is that of Falcilysin from Plasmodium falciparum (isolate 3D7).